A 127-amino-acid polypeptide reads, in one-letter code: Small ribosomal subunit protein uS11 (127 aa).

The protein belongs to the universal ribosomal protein uS11 family. In terms of assembly, part of the 30S ribosomal subunit. Interacts with proteins S7 and S18. Binds to IF-3.

Located on the platform of the 30S subunit, it bridges several disparate RNA helices of the 16S rRNA. Forms part of the Shine-Dalgarno cleft in the 70S ribosome. In Rickettsia africae (strain ESF-5), this protein is Small ribosomal subunit protein uS11.